A 396-amino-acid polypeptide reads, in one-letter code: Mannonate dehydratase (396 aa).

The protein belongs to the mannonate dehydratase family. Fe(2+) serves as cofactor. It depends on Mn(2+) as a cofactor.

The enzyme catalyses D-mannonate = 2-dehydro-3-deoxy-D-gluconate + H2O. The protein operates within carbohydrate metabolism; pentose and glucuronate interconversion. Its function is as follows. Catalyzes the dehydration of D-mannonate. This Enterobacter sp. (strain 638) protein is Mannonate dehydratase.